A 382-amino-acid chain; its full sequence is MRYLTAGESHGPKLVGILEGVPSGAKIDKETIDQALQERQKGPGRGGRMKIEKDQITILSGVRGGLTTGAPIALEIINRDWANWEKIMAWGDEADLESRKVMTPRPGHADLTGYLKYRTEVRNVLERASARETAMRVAIGNIAVQILEALGVEIRGQVLSVGKVHMDSEDTPEYWQRVQASEWKVGDPKGEEALDAQLQEARSQGESLGGVLQIQVRNLLPGLGSYVQWDRKLDGRLAQAVLSVQAIKGVAFGMGFTAGQHFGSEVHDPIGYDSGRGYYRYSNNAGGIEGGMTNGEPVIIEAVMKPIPTLYSPLSTVNLETKEVMEASVERSDVCAVPAALVVLKHVAAWEILQAILEKFPADTWDELDKAWQDYKRFVSEQ.

Residues arginine 39 and arginine 45 each contribute to the NADP(+) site. FMN-binding positions include 127-129, 245-246, glycine 290, 305-309, and arginine 331; these read RAS, QA, and KPIPT.

Belongs to the chorismate synthase family. In terms of assembly, homotetramer. The cofactor is FMNH2.

It carries out the reaction 5-O-(1-carboxyvinyl)-3-phosphoshikimate = chorismate + phosphate. The protein operates within metabolic intermediate biosynthesis; chorismate biosynthesis; chorismate from D-erythrose 4-phosphate and phosphoenolpyruvate: step 7/7. Catalyzes the anti-1,4-elimination of the C-3 phosphate and the C-6 proR hydrogen from 5-enolpyruvylshikimate-3-phosphate (EPSP) to yield chorismate, which is the branch point compound that serves as the starting substrate for the three terminal pathways of aromatic amino acid biosynthesis. This reaction introduces a second double bond into the aromatic ring system. The chain is Chorismate synthase from Desulfitobacterium hafniense (strain DSM 10664 / DCB-2).